Reading from the N-terminus, the 284-residue chain is 4-hydroxybenzoate octaprenyltransferase (284 aa).

The next 9 helical transmembrane spans lie at 19–39, 42–62, 85–105, 107–127, 134–154, 165–185, 211–231, 233–253, and 261–281; these read IPIL…SHGL, ISYL…GCII, GQLS…VAFI, VLFL…LAIL, FFAI…FMAF, AWIF…IYAL, ILLF…YCDF, SFFY…YFLY, and CINA…MAVI.

Belongs to the UbiA prenyltransferase family. It depends on Mg(2+) as a cofactor.

It localises to the cell inner membrane. It catalyses the reaction all-trans-octaprenyl diphosphate + 4-hydroxybenzoate = 4-hydroxy-3-(all-trans-octaprenyl)benzoate + diphosphate. The protein operates within cofactor biosynthesis; ubiquinone biosynthesis. Functionally, catalyzes the prenylation of para-hydroxybenzoate (PHB) with an all-trans polyprenyl group. Mediates the second step in the final reaction sequence of ubiquinone-8 (UQ-8) biosynthesis, which is the condensation of the polyisoprenoid side chain with PHB, generating the first membrane-bound Q intermediate 3-octaprenyl-4-hydroxybenzoate. The sequence is that of 4-hydroxybenzoate octaprenyltransferase from Francisella tularensis subsp. novicida (strain U112).